Reading from the N-terminus, the 222-residue chain is Ras-related protein RABA4d (222 aa).

22–29 (GDSAVGKT) provides a ligand contact to GTP. An Effector region motif is present at residues 44 to 52 (SKATIGVEF). GTP-binding positions include 70–74 (DTAGQ), 128–131 (NKCD), and 158–159 (SA). Residues C218 and C219 are each lipidated (S-geranylgeranyl cysteine).

Belongs to the small GTPase superfamily. Rab family. In terms of assembly, interacts with PI4KB1. In terms of tissue distribution, specifically expressed in pollen and localized to the tips of growing pollen tubes.

It localises to the cytoplasmic vesicle membrane. In terms of biological role, intracellular vesicle trafficking and protein transport. Plays an important role in the regulation of pollen tube tip growth. The sequence is that of Ras-related protein RABA4d (RABA4D) from Arabidopsis thaliana (Mouse-ear cress).